Reading from the N-terminus, the 249-residue chain is Isoamyl acetate-hydrolyzing esterase 1 homolog (249 aa).

Serine 24 functions as the Nucleophile in the catalytic mechanism. Lysine 63 carries the N6-succinyllysine modification. The active-site Proton donor is aspartate 197. The active-site Proton acceptor is histidine 200.

This sequence belongs to the 'GDSL' lipolytic enzyme family. IAH1 subfamily.

Functionally, probable lipase. In Rattus norvegicus (Rat), this protein is Isoamyl acetate-hydrolyzing esterase 1 homolog (Iah1).